A 390-amino-acid polypeptide reads, in one-letter code: MRKMLAAVSRVLSGASQKPASRVLVASRNFANDATFEIKKCDLHRLEEGPPVTTVLTREDGLKYYRMMQTVRRMELKADQLYKQKIIRGFCHLCDGQEACCVGLEAGINPTDHLITAYRAHGFTFTRGLSVREILAELTGRKGGCAKGKGGSMHMYAKNFYGGNGIVGAQVPLGAGIALACKYNGKDEVCLTLYGDGAANQGQIFEAYNMAALWKLPCIFICENNRYGMGTSVERAAASTDYYKRGDFIPGLRVDGMDILCVREATRFAAAYCRSGKGPILMELQTYRYHGHSMSDPGVSYRTREEIQEVRSKSDPIMLLKDRMVNSNLASVEELKEIDVEVRKEIEDAAQFATADPEPPLEELGYHIYSSDPPFEVRGANQWIKFKSVS.

The transit peptide at 1–29 (MRKMLAAVSRVLSGASQKPASRVLVASRN) directs the protein to the mitochondrion. Position 63 is an N6-acetyllysine; alternate (Lys63). At Lys63 the chain carries N6-succinyllysine; alternate. Pyruvate-binding residues include His92, Tyr118, Arg119, Ala157, Gly165, Val167, Asp196, Gly197, Ala198, Asn225, and Tyr227. Positions 118 and 119 each coordinate thiamine diphosphate. Positions 165, 167, 196, 197, 198, and 225 each coordinate thiamine diphosphate. Asp196 contacts Mg(2+). Residues Asn225 and Tyr227 each contribute to the Mg(2+) site. Phosphoserine; by PDK1 is present on Ser232. Lys244 is subject to N6-acetyllysine; alternate. Lys244 carries the N6-succinyllysine; alternate modification. Lys277 carries the post-translational modification N6-succinyllysine. His292 is a binding site for thiamine diphosphate. A Phosphoserine; by PDK1, PDK2, PDK3 and PDK4 modification is found at Ser293. The residue at position 295 (Ser295) is a Phosphoserine. A Phosphoserine; by PDK1, PDK2, PDK3 and PDK4 modification is found at Ser300. Tyr301 is subject to Phosphotyrosine. An N6-acetyllysine; alternate modification is found at Lys313. Lys313 is modified (N6-succinyllysine; alternate). An N6-acetyllysine mark is found at Lys321 and Lys336. Lys385 carries the N6-succinyllysine modification.

Heterotetramer of two PDHA1 and two PDHB subunits. The heterotetramer interacts with DLAT, and is part of the multimeric pyruvate dehydrogenase complex that contains multiple copies of pyruvate dehydrogenase (E1), dihydrolipoamide acetyltransferase (DLAT, E2) and lipoamide dehydrogenase (DLD, E3). These subunits are bound to an inner core composed of about 48 DLAT and 12 PDHX molecules. Thiamine diphosphate serves as cofactor. It depends on Mg(2+) as a cofactor. In terms of processing, phosphorylation at Ser-232, Ser-293 and Ser-300 by PDK family kinases inactivates the enzyme; for this phosphorylation at a single site is sufficient. Dephosphorylation at all three sites, i.e. at Ser-232, Ser-293 and Ser-300, is required for reactivation. Acetylation alters the phosphorylation pattern. Deacetylated by SIRT3. Ubiquitous.

It is found in the mitochondrion matrix. The catalysed reaction is N(6)-[(R)-lipoyl]-L-lysyl-[protein] + pyruvate + H(+) = N(6)-[(R)-S(8)-acetyldihydrolipoyl]-L-lysyl-[protein] + CO2. Its activity is regulated as follows. Pyruvate dehydrogenase activity is inhibited by phosphorylation of PDHA1; it is reactivated by dephosphorylation. The pyruvate dehydrogenase complex catalyzes the overall conversion of pyruvate to acetyl-CoA and CO(2), and thereby links the glycolytic pathway to the tricarboxylic cycle. In Homo sapiens (Human), this protein is Pyruvate dehydrogenase E1 component subunit alpha, somatic form, mitochondrial (PDHA1).